Here is a 66-residue protein sequence, read N- to C-terminus: Large ribosomal subunit protein bL33c (66 aa).

The protein belongs to the bacterial ribosomal protein bL33 family.

It is found in the plastid. It localises to the chloroplast. The chain is Large ribosomal subunit protein bL33c from Nasturtium officinale (Watercress).